Consider the following 131-residue polypeptide: Ribosome-binding factor A (131 aa).

Belongs to the RbfA family. In terms of assembly, monomer. Binds 30S ribosomal subunits, but not 50S ribosomal subunits or 70S ribosomes.

The protein resides in the cytoplasm. Functionally, one of several proteins that assist in the late maturation steps of the functional core of the 30S ribosomal subunit. Associates with free 30S ribosomal subunits (but not with 30S subunits that are part of 70S ribosomes or polysomes). Required for efficient processing of 16S rRNA. May interact with the 5'-terminal helix region of 16S rRNA. The polypeptide is Ribosome-binding factor A (Christiangramia forsetii (strain DSM 17595 / CGMCC 1.15422 / KT0803) (Gramella forsetii)).